The sequence spans 192 residues: Protein FAM169BP (192 aa).

Residues 121 to 192 (YQAHPGNSED…PPGKLTRSSP (72 aa)) are disordered. Residues 159-177 (EELEDTKDDPECGVEEEDA) are compositionally biased toward acidic residues.

This sequence belongs to the FAM169 family.

This chain is Protein FAM169BP, found in Homo sapiens (Human).